The sequence spans 236 residues: uncharacterized protein (236 aa).

The signal sequence occupies residues 1–29 (MKGGDKMKKLILLMLLLPISLIGCTDEES).

This is an uncharacterized protein from Archaeoglobus fulgidus (strain ATCC 49558 / DSM 4304 / JCM 9628 / NBRC 100126 / VC-16).